A 213-amino-acid polypeptide reads, in one-letter code: Phosphatidylserine decarboxylase proenzyme (213 aa).

S180 serves as the catalytic Schiff-base intermediate with substrate; via pyruvic acid. At S180 the chain carries Pyruvic acid (Ser); by autocatalysis.

This sequence belongs to the phosphatidylserine decarboxylase family. PSD-A subfamily. In terms of assembly, heterodimer of a large membrane-associated beta subunit and a small pyruvoyl-containing alpha subunit. The cofactor is pyruvate. Post-translationally, is synthesized initially as an inactive proenzyme. Formation of the active enzyme involves a self-maturation process in which the active site pyruvoyl group is generated from an internal serine residue via an autocatalytic post-translational modification. Two non-identical subunits are generated from the proenzyme in this reaction, and the pyruvate is formed at the N-terminus of the alpha chain, which is derived from the carboxyl end of the proenzyme. The post-translation cleavage follows an unusual pathway, termed non-hydrolytic serinolysis, in which the side chain hydroxyl group of the serine supplies its oxygen atom to form the C-terminus of the beta chain, while the remainder of the serine residue undergoes an oxidative deamination to produce ammonia and the pyruvoyl prosthetic group on the alpha chain.

Its subcellular location is the cell membrane. It carries out the reaction a 1,2-diacyl-sn-glycero-3-phospho-L-serine + H(+) = a 1,2-diacyl-sn-glycero-3-phosphoethanolamine + CO2. It participates in phospholipid metabolism; phosphatidylethanolamine biosynthesis; phosphatidylethanolamine from CDP-diacylglycerol: step 2/2. In terms of biological role, catalyzes the formation of phosphatidylethanolamine (PtdEtn) from phosphatidylserine (PtdSer). This Carboxydothermus hydrogenoformans (strain ATCC BAA-161 / DSM 6008 / Z-2901) protein is Phosphatidylserine decarboxylase proenzyme.